A 432-amino-acid polypeptide reads, in one-letter code: Glutamate-1-semialdehyde 2,1-aminomutase 1 (432 aa).

Lysine 272 is modified (N6-(pyridoxal phosphate)lysine).

The protein belongs to the class-III pyridoxal-phosphate-dependent aminotransferase family. HemL subfamily. Homodimer. Requires pyridoxal 5'-phosphate as cofactor.

The protein resides in the cytoplasm. It catalyses the reaction (S)-4-amino-5-oxopentanoate = 5-aminolevulinate. It participates in porphyrin-containing compound metabolism; protoporphyrin-IX biosynthesis; 5-aminolevulinate from L-glutamyl-tRNA(Glu): step 2/2. This chain is Glutamate-1-semialdehyde 2,1-aminomutase 1, found in Exiguobacterium sp. (strain ATCC BAA-1283 / AT1b).